We begin with the raw amino-acid sequence, 445 residues long: Phosphoglucosamine mutase (445 aa).

The active-site Phosphoserine intermediate is the Ser-102. Residues Ser-102, Asp-241, Asp-243, and Asp-245 each coordinate Mg(2+). Ser-102 carries the post-translational modification Phosphoserine.

It belongs to the phosphohexose mutase family. The cofactor is Mg(2+). Post-translationally, activated by phosphorylation.

It carries out the reaction alpha-D-glucosamine 1-phosphate = D-glucosamine 6-phosphate. In terms of biological role, catalyzes the conversion of glucosamine-6-phosphate to glucosamine-1-phosphate. In Enterobacter sp. (strain 638), this protein is Phosphoglucosamine mutase.